A 376-amino-acid chain; its full sequence is Mitogen-activated protein kinase 5 (376 aa).

Residues 43 to 329 (VPPIRPIGRG…VEEALCYPYL (287 aa)) enclose the Protein kinase domain. ATP-binding positions include 49 to 57 (IGRGAYGFV) and Lys72. Asp169 (proton acceptor) is an active-site residue. Position 201 is a phosphothreonine (Thr201). The TXY motif lies at 201 to 203 (TEY). Position 203 is a phosphotyrosine (Tyr203). The residue at position 206 (Thr206) is a Phosphothreonine.

The protein belongs to the protein kinase superfamily. CMGC Ser/Thr protein kinase family. MAP kinase subfamily. Post-translationally, autophosphorylated on threonine and tyrosine residues. In terms of processing, dually phosphorylated on Thr-201 and Tyr-203, which activates the enzyme.

The enzyme catalyses L-seryl-[protein] + ATP = O-phospho-L-seryl-[protein] + ADP + H(+). It carries out the reaction L-threonyl-[protein] + ATP = O-phospho-L-threonyl-[protein] + ADP + H(+). With respect to regulation, activated by threonine and tyrosine phosphorylation. Activated by the MAP kinase kinase MKK2. Activated by the MAP kinase kinase MKK6 in vitro. This is Mitogen-activated protein kinase 5 (MPK5) from Arabidopsis thaliana (Mouse-ear cress).